Here is a 105-residue protein sequence, read N- to C-terminus: UPF0166 protein aq_450 (105 aa).

This sequence belongs to the UPF0166 family.

This chain is UPF0166 protein aq_450, found in Aquifex aeolicus (strain VF5).